We begin with the raw amino-acid sequence, 404 residues long: S-adenosylmethionine synthase (404 aa).

Over residues 1–13 the composition is skewed to polar residues; that stretch reads MSQSRYFFTSESV. The tract at residues 1-20 is disordered; that stretch reads MSQSRYFFTSESVSEGHPDK. Position 17 (His17) interacts with ATP. Asp19 lines the Mg(2+) pocket. Glu45 serves as a coordination point for K(+). 2 residues coordinate L-methionine: Glu58 and Gln101. Residues 101–111 are flexible loop; it reads QSPDINRGVDR. ATP-binding positions include 172-174, 245-246, Asp254, 260-261, Ala277, and Lys281; these read DAK, RF, and RK. Asp254 lines the L-methionine pocket. Lys285 serves as a coordination point for L-methionine.

It belongs to the AdoMet synthase family. Homotetramer; dimer of dimers. Mg(2+) is required as a cofactor. K(+) serves as cofactor.

It localises to the cytoplasm. It catalyses the reaction L-methionine + ATP + H2O = S-adenosyl-L-methionine + phosphate + diphosphate. The protein operates within amino-acid biosynthesis; S-adenosyl-L-methionine biosynthesis; S-adenosyl-L-methionine from L-methionine: step 1/1. Its function is as follows. Catalyzes the formation of S-adenosylmethionine (AdoMet) from methionine and ATP. The overall synthetic reaction is composed of two sequential steps, AdoMet formation and the subsequent tripolyphosphate hydrolysis which occurs prior to release of AdoMet from the enzyme. The protein is S-adenosylmethionine synthase of Chlorobium limicola (strain DSM 245 / NBRC 103803 / 6330).